The following is a 131-amino-acid chain: Large-conductance mechanosensitive channel (131 aa).

A run of 3 helical transmembrane segments spans residues 8–28 (FALKGNVLDLAVGVIIGGAFG), 30–50 (IVTSLVNDIIMPILGLVVGGI), and 72–92 (GQFIQTTFDFLIIAFSIFMFI).

Belongs to the MscL family. In terms of assembly, homopentamer.

It is found in the cell membrane. Channel that opens in response to stretch forces in the membrane lipid bilayer. May participate in the regulation of osmotic pressure changes within the cell. The sequence is that of Large-conductance mechanosensitive channel from Alkaliphilus oremlandii (strain OhILAs) (Clostridium oremlandii (strain OhILAs)).